A 233-amino-acid chain; its full sequence is Archaetidylserine synthase (233 aa).

8 helical membrane-spanning segments follow: residues 7-27 (ITSF…SGYL), 29-49 (ILLS…LAVL), 75-95 (SLSD…SAAV), 102-122 (ILVG…FNVL), 126-146 (GKNF…SFYL), 147-167 (TGFY…VLMI), 180-200 (ASTA…VEIL), and 206-226 (VAGP…AVPI).

It belongs to the CDP-alcohol phosphatidyltransferase class-I family.

The protein localises to the membrane. The catalysed reaction is CDP-2,3-bis-O-(geranylgeranyl)-sn-glycerol + L-serine = archaetidylserine + CMP + H(+). The enzyme catalyses CDP-2,3-bis-O-(phytanyl)-sn-glycerol + L-serine = 2,3-bis-O-phytanyl-sn-glycero-3-phospho-L-serine + CMP + H(+). Its pathway is membrane lipid metabolism; glycerophospholipid metabolism. Activated by Mn(2+) ions. In terms of biological role, involved in the lipid biosynthesis. Catalyzes the formation of unsaturated archaetidylserine from CDP-unsaturated archaeol and L-serine. Activity with ester-linked substrate analogs containing straight aliphatic chains (typical bacterial substrates) is two to three times higher than that with the corresponding ether-type substrate (typical archaeal substrates). Both enantiomers of CDP-unsaturated archaeols with ether-linked geranylgeranyl chains and CDP-saturated archaeol with ether-linked phytanyl chains are similarly active. The enzyme also accepts D-serine, although activity is only about third of that with L-serine. The protein is Archaetidylserine synthase of Methanothermobacter thermautotrophicus (strain ATCC 29096 / DSM 1053 / JCM 10044 / NBRC 100330 / Delta H) (Methanobacterium thermoautotrophicum).